Reading from the N-terminus, the 495-residue chain is MAAGAPAAGARRGGSEAICNLVICNDSSLRSQPIIFNPDFFVEKLRHEKPEVFTELVVSNITRLIDLPGAELAQLMGEEDPKLPGANSTASGFFRSLMSLKRKEKGVVFGSPLTEEGIAQVSQLIEYLHKNLRAEGLFRVPGNSIRQQILKDALNSGTDIDLDSGEFHSNDVATLLKMFLGELPEPLLTHKHFHAHLKIADLTLFDEKGNKTSTPDKERQIEALQLLFLILPAPNRSLLKLLLDLLYQTAKKQDKNKMSAHNLALMFAPHILWPRNVTANDLQENITKLNNGVTFMIKHSQKLFKAPAYIRECARLHYLGSRAHTSKDDLDLLTSPGSKELQPLKSQKRSRLDSCHQEETQQRTEEALRELFRHVHNMPDSAKKKKLIRQFNKHPSALTPSSDVATPPAPRRARSRSFSGLIKRKVLGTPVIQERKSRDSTPEPKRVSKENVHLLQKCGSPAHMSQGKLKSLEGQKEESCRRMRAHLLSKDSSSL.

One can recognise a Rho-GAP domain in the interval 98–304 (MSLKRKEKGV…FMIKHSQKLF (207 aa)). 2 disordered regions span residues 327–362 (KDDL…ETQQ) and 393–495 (KHPS…SSSL). 3 stretches are compositionally biased toward basic and acidic residues: residues 350-362 (SRLD…ETQQ), 433-452 (QERK…KENV), and 470-481 (KSLEGQKEESCR).

In terms of biological role, GTPase activator for the Rho-type GTPases by converting them to an inactive GDP-bound state. The polypeptide is Rho GTPase-activating protein 19 (ARHGAP19) (Gallus gallus (Chicken)).